The primary structure comprises 437 residues: Putrescine hydroxycinnamoyltransferase 3 (437 aa).

Residues His151 and Asp383 each act as proton acceptor in the active site.

The protein belongs to the plant acyltransferase family. In terms of tissue distribution, highly expressed in roots. Expressed at low levels in shoots and flowers.

Functionally, hydroxycinnamoyl transferase that catalyzes the transfer of an acyl from p-coumaryol-CoA to putrescine, to produce coumaroyl putrescine. Can use feruloyl-CoA and caffeoyl-CoA as acyl donors. This Oryza sativa subsp. japonica (Rice) protein is Putrescine hydroxycinnamoyltransferase 3.